The following is a 141-amino-acid chain: Transcription antitermination protein NusB (141 aa).

Belongs to the NusB family.

In terms of biological role, involved in transcription antitermination. Required for transcription of ribosomal RNA (rRNA) genes. Binds specifically to the boxA antiterminator sequence of the ribosomal RNA (rrn) operons. The protein is Transcription antitermination protein NusB of Neisseria gonorrhoeae (strain ATCC 700825 / FA 1090).